The primary structure comprises 177 residues: 3-isopropylmalate dehydratase small subunit 1 (177 aa).

A disordered region spans residues 157–177; the sequence is GRFPGEEPGAEASTETASAAE. The span at 162-177 shows a compositional bias: low complexity; it reads EEPGAEASTETASAAE.

The protein belongs to the LeuD family. LeuD type 2 subfamily. As to quaternary structure, heterodimer of LeuC and LeuD.

It catalyses the reaction (2R,3S)-3-isopropylmalate = (2S)-2-isopropylmalate. The protein operates within amino-acid biosynthesis; L-leucine biosynthesis; L-leucine from 3-methyl-2-oxobutanoate: step 2/4. Its function is as follows. Catalyzes the isomerization between 2-isopropylmalate and 3-isopropylmalate, via the formation of 2-isopropylmaleate. This is 3-isopropylmalate dehydratase small subunit 1 (leuD1) from Deinococcus radiodurans (strain ATCC 13939 / DSM 20539 / JCM 16871 / CCUG 27074 / LMG 4051 / NBRC 15346 / NCIMB 9279 / VKM B-1422 / R1).